The following is a 995-amino-acid chain: MSASKLWSCTETVLNGGIKLFLYSSKNTKLRVAIGEVPGPMVHGAVSFVTEADSDDGLPHTLEHLVFMGSKKYPFKGVLDVIANRCLADGTNAWTDTDHTAYTLSTVGSDGFLKVLPVYINHLLTPMLTASQFATEVHHITGEGNDAGVVYSEMQDHESEMESIMDRKTKEVIYPPFNPYAVDTGGRLKNLRESCTLEKVRDYHKKFYHLSNMVVTVCGMVDHDQVLEIMNNVENEHMSTVPDHFPKPFSFALSDIKESTVHRVECPTDDASRGAVEVAWFAHSPSDLETHSSLHVLFDYLSNTSVAPLQKDFILLEDPLASSVSFHIAEGVRCDLRLNFAGVPVEKLDECAPKFFDKTVREHLEEANFDMERMGYLIDQTILNELVKLETNAPKDIMSHIIGHQLFDNEDEELFKKRTNEIDFLKKLKSEPASYWVQLVNKYFTAPSATVIGVPNEELVDKIAEEEEKRIAAQCEKLGKKGLEEAGKSLEAAILENTANHPSAELLDQLIVKDLEAFDRFPVQSLTSNSPSLTPQQSTFLAQFPFHANLHNCPTKFVEIFFLLDSSNLSIEDRSYLFLYTDLLFESPAMIDGVLTSADDVAKHFTKDLIDHSIQVGVSGLYDRFVNLRIKVGADKYPLLAKWAQIFTQGVVFDPSRIHQCAQKLAGEARDRKRDGCTVASTAVASMVYGKNTNCILFDELVLEKLHEKISKDVMKNPEAVLEKLEQVRSALFSNGVNAHFVADVDSIDPKMLSSDLWTWVQADPRFGPGHQFSAEAGENVSLELGKELLIGVGGSESSFIYQTSFLDANWNSEELIPAMIFGQYLSQCEGPLWRAIRGDGLAYGANVFVKPDRKQITLSLYRCAQPAVAYERTRDIIRKIVESGEISKAEFEGAKRSTVFEMMKREGTVSGAAKISILNNFRQTPHPFNIDLCRRIWNLTSEEMVKIGGPPLARLFDEKCFVRSIAVHPSKLNEMKKAFPGSSKIKISDLQFAC.

This is an uncharacterized protein from Caenorhabditis elegans.